Consider the following 183-residue polypeptide: Glutathione-regulated potassium-efflux system ancillary protein KefG (183 aa).

Belongs to the NAD(P)H dehydrogenase (quinone) family. KefG subfamily. Interacts with KefB.

Its subcellular location is the cell inner membrane. The catalysed reaction is a quinone + NADH + H(+) = a quinol + NAD(+). It catalyses the reaction a quinone + NADPH + H(+) = a quinol + NADP(+). Its function is as follows. Regulatory subunit of a potassium efflux system that confers protection against electrophiles. Required for full activity of KefB. This Serratia proteamaculans (strain 568) protein is Glutathione-regulated potassium-efflux system ancillary protein KefG.